Consider the following 316-residue polypeptide: Protein YIPF2 (316 aa).

Alanine 2 carries the post-translational modification N-acetylalanine. Over alanine 2–proline 124 the chain is Cytoplasmic. The disordered stretch occupies residues threonine 16–glutamine 37. Residues alanine 25–proline 36 are compositionally biased toward polar residues. A helical transmembrane segment spans residues phenylalanine 125 to leucine 145. At alanine 146 to threonine 163 the chain is on the lumenal side. The chain crosses the membrane as a helical span at residues valine 164–leucine 184. The Cytoplasmic segment spans residues arginine 185 to proline 196. Residues tyrosine 197–leucine 219 traverse the membrane as a helical segment. The Lumenal segment spans residues tryptophan 220 to phenylalanine 231. A helical membrane pass occupies residues glycine 232–arginine 252. The Cytoplasmic portion of the chain corresponds to glutamate 253–arginine 256. The helical transmembrane segment at leucine 257–cysteine 277 threads the bilayer. The Lumenal portion of the chain corresponds to lysine 278–serine 316.

This sequence belongs to the YIP1 family. In terms of assembly, interacts with YIPF6; this interaction may stabilize YIPF2. May also form a ternary complex with YIPF1 and YIPF6.

Its subcellular location is the golgi apparatus. The protein localises to the cis-Golgi network membrane. It localises to the trans-Golgi network membrane. The protein resides in the late endosome membrane. This is Protein YIPF2 (YIPF2) from Homo sapiens (Human).